Reading from the N-terminus, the 222-residue chain is 2-C-methyl-D-erythritol 4-phosphate cytidylyltransferase (222 aa).

This sequence belongs to the IspD/TarI cytidylyltransferase family. IspD subfamily.

The enzyme catalyses 2-C-methyl-D-erythritol 4-phosphate + CTP + H(+) = 4-CDP-2-C-methyl-D-erythritol + diphosphate. It functions in the pathway isoprenoid biosynthesis; isopentenyl diphosphate biosynthesis via DXP pathway; isopentenyl diphosphate from 1-deoxy-D-xylulose 5-phosphate: step 2/6. Its function is as follows. Catalyzes the formation of 4-diphosphocytidyl-2-C-methyl-D-erythritol from CTP and 2-C-methyl-D-erythritol 4-phosphate (MEP). The sequence is that of 2-C-methyl-D-erythritol 4-phosphate cytidylyltransferase from Thermotoga maritima (strain ATCC 43589 / DSM 3109 / JCM 10099 / NBRC 100826 / MSB8).